The following is a 27-amino-acid chain: C-reactive protein P1 (27 aa).

Positions 1–27 (IPQDLSGKMLTFPKEEDDDDVKLMTPK) are disordered. The 22-residue stretch at 6 to 27 (SGKMLTFPKEEDDDDVKLMTPK) folds into the Pentraxin (PTX) domain.

Belongs to the pentraxin family. As to quaternary structure, homopentamer. Pentraxin (or pentaxin) have a discoid arrangement of 5 non-covalently bound subunits. Exists as a dimer under reducing conditions. It depends on Ca(2+) as a cofactor. Post-translationally, glycosylated.

The protein localises to the secreted. Its function is as follows. Displays several functions associated with host defense: it promotes agglutination, bacterial capsular swelling, phagocytosis, and complement fixation through its calcium-dependent binding to phosphorylcholine. This is C-reactive protein P1 from Gadus morhua (Atlantic cod).